A 172-amino-acid chain; its full sequence is Adenine phosphoribosyltransferase (172 aa).

This sequence belongs to the purine/pyrimidine phosphoribosyltransferase family. In terms of assembly, homodimer.

The protein resides in the cytoplasm. The catalysed reaction is AMP + diphosphate = 5-phospho-alpha-D-ribose 1-diphosphate + adenine. Its pathway is purine metabolism; AMP biosynthesis via salvage pathway; AMP from adenine: step 1/1. In terms of biological role, catalyzes a salvage reaction resulting in the formation of AMP, that is energically less costly than de novo synthesis. The chain is Adenine phosphoribosyltransferase from Lactiplantibacillus plantarum (strain ATCC BAA-793 / NCIMB 8826 / WCFS1) (Lactobacillus plantarum).